The primary structure comprises 294 residues: GTPase Era (294 aa).

Positions 2-171 constitute an Era-type G domain; that stretch reads NSGVVTIIGR…LSLLIELLPE (170 aa). Positions 10-17 are G1; sequence GRPSAGKS. 10–17 contributes to the GTP binding site; it reads GRPSAGKS. Residues 36–40 are G2; sequence QTTRN. The tract at residues 57–60 is G3; sequence DTPG. GTP contacts are provided by residues 57 to 61 and 119 to 122; these read DTPGY and NKAD. Residues 119–122 are G4; sequence NKAD. Residues 150 to 152 form a G5 region; sequence ISA. A KH type-2 domain is found at 202-280; sequence TREEIPHALY…QLDLQVRVNK (79 aa).

Belongs to the TRAFAC class TrmE-Era-EngA-EngB-Septin-like GTPase superfamily. Era GTPase family. Monomer.

It localises to the cytoplasm. The protein localises to the cell inner membrane. In terms of biological role, an essential GTPase that binds both GDP and GTP, with rapid nucleotide exchange. Plays a role in 16S rRNA processing and 30S ribosomal subunit biogenesis and possibly also in cell cycle regulation and energy metabolism. This chain is GTPase Era, found in Treponema denticola (strain ATCC 35405 / DSM 14222 / CIP 103919 / JCM 8153 / KCTC 15104).